A 340-amino-acid chain; its full sequence is Aldose 1-epimerase (340 aa).

R77 serves as a coordination point for substrate. H172 serves as the catalytic Proton donor. Position 243 (D243) interacts with substrate. Catalysis depends on E305, which acts as the Proton acceptor.

This sequence belongs to the aldose epimerase family.

It localises to the cytoplasm. The catalysed reaction is alpha-D-glucose = beta-D-glucose. It functions in the pathway carbohydrate metabolism; hexose metabolism. In terms of biological role, mutarotase converts alpha-aldose to the beta-anomer. It is active on D-glucose, L-arabinose, D-xylose, D-galactose, maltose and lactose. The sequence is that of Aldose 1-epimerase (galM) from Haemophilus influenzae (strain ATCC 51907 / DSM 11121 / KW20 / Rd).